Consider the following 509-residue polypeptide: CDK5RAP3 protein homolog (509 aa).

It belongs to the CDK5RAP3 family.

It localises to the nucleus. The protein localises to the cytoplasm. In terms of biological role, substrate adapter of E3 ligase complexes mediating ufmylation, the covalent attachment of the ubiquitin-like modifier UFM1 to substrate proteins, and which is involved in various processes, such as ribosome recycling and reticulophagy (also called ER-phagy). The polypeptide is CDK5RAP3 protein homolog (Drosophila melanogaster (Fruit fly)).